The primary structure comprises 145 residues: D-aminoacyl-tRNA deacylase (145 aa).

The Gly-cisPro motif, important for rejection of L-amino acids motif lies at 137–138 (GP).

This sequence belongs to the DTD family. As to quaternary structure, homodimer.

Its subcellular location is the cytoplasm. It catalyses the reaction glycyl-tRNA(Ala) + H2O = tRNA(Ala) + glycine + H(+). It carries out the reaction a D-aminoacyl-tRNA + H2O = a tRNA + a D-alpha-amino acid + H(+). Its function is as follows. An aminoacyl-tRNA editing enzyme that deacylates mischarged D-aminoacyl-tRNAs. Also deacylates mischarged glycyl-tRNA(Ala), protecting cells against glycine mischarging by AlaRS. Acts via tRNA-based rather than protein-based catalysis; rejects L-amino acids rather than detecting D-amino acids in the active site. By recycling D-aminoacyl-tRNA to D-amino acids and free tRNA molecules, this enzyme counteracts the toxicity associated with the formation of D-aminoacyl-tRNA entities in vivo and helps enforce protein L-homochirality. This Pseudomonas putida (strain ATCC 47054 / DSM 6125 / CFBP 8728 / NCIMB 11950 / KT2440) protein is D-aminoacyl-tRNA deacylase.